A 672-amino-acid polypeptide reads, in one-letter code: MRRREPGRDVKRAAEEEFIELERRTDTYEDAVLNEDPQMKGFRFPSILSFPVPNKTIETGVTDENPFSARKSAFFTNRLIGREESDSSSSREDSPLGSTETGESCSTTDDEESKEKRIEYRDSQTQRCLGFCFRQLFFSRMWVFILQFIASYYAGDRFRTDGFNLVDKLIEPGQSVFGDVVVRRGLMGLRRWDAQQFLFIAEHHYIFEHSLAFFAGFPETVNYVRVGVNNGMESVFGWTFPPWVTITLAAVFVNLFCFLLCGMTLYQVVLIMTRSVKISLLAVSIFAFNPASIFFSSAYSESMFFTMTLTGFVFMLFGLRGKGFWHRMLKGFTGTICFGLTFAVRSNGLLNFLYVAWIWCGTLLWDEEMPIPDCHKLISTLAATKNERYKQEWQAKFWRFQQKRKQNRKVFRWTDPNFSRCVTLFIVIVCAISATLLFFTPYVFMTNFTADEFCKPQDSHKQAVETIAKTVRLSPKTVSVKNAWEKTTWCKKPKLFGIIARYYGEIQTKYWSVKFFGYWKIKKIPCFLMMLPAAILTVLAIKSSWNDVFLNKRWNNIWVLTARSDHSLPMAIHSSVLLFVAIFYINSEVFTRIIFSSSPFIYIYIATYIDKLTQGTIAGNRLWQYFESPGILPFFVFRRVWQDGWRGKLLYIYILGYFVFGTMAHSAWLPFT.

Over 1 to 134 (MRRREPGRDV…TQRCLGFCFR (134 aa)) the chain is Cytoplasmic. Over residues 82-94 (REESDSSSSREDS) the composition is skewed to basic and acidic residues. Positions 82–115 (REESDSSSSREDSPLGSTETGESCSTTDDEESKE) are disordered. A compositionally biased stretch (low complexity) spans 97–107 (GSTETGESCST). The chain crosses the membrane as a helical span at residues 135 to 155 (QLFFSRMWVFILQFIASYYAG). Over 156–239 (DRFRTDGFNL…NGMESVFGWT (84 aa)) the chain is Extracellular. Residues 240-260 (FPPWVTITLAAVFVNLFCFLL) form a helical membrane-spanning segment. The Cytoplasmic segment spans residues 261-277 (CGMTLYQVVLIMTRSVK). 2 consecutive transmembrane segments (helical) span residues 278–298 (ISLL…FSSA) and 299–319 (YSES…LFGL). At 320-345 (RGKGFWHRMLKGFTGTICFGLTFAVR) the chain is on the extracellular side. The helical transmembrane segment at 346–366 (SNGLLNFLYVAWIWCGTLLWD) threads the bilayer. At 367-423 (EEMPIPDCHKLISTLAATKNERYKQEWQAKFWRFQQKRKQNRKVFRWTDPNFSRCVT) the chain is on the cytoplasmic side. A helical membrane pass occupies residues 424 to 444 (LFIVIVCAISATLLFFTPYVF). Residues 445–520 (MTNFTADEFC…WSVKFFGYWK (76 aa)) are Extracellular-facing. Residues 521–541 (IKKIPCFLMMLPAAILTVLAI) traverse the membrane as a helical segment. The Cytoplasmic segment spans residues 542–569 (KSSWNDVFLNKRWNNIWVLTARSDHSLP). A helical transmembrane segment spans residues 570–590 (MAIHSSVLLFVAIFYINSEVF). The Extracellular portion of the chain corresponds to 591–592 (TR). Residues 593 to 613 (IIFSSSPFIYIYIATYIDKLT) traverse the membrane as a helical segment. The Cytoplasmic segment spans residues 614 to 648 (QGTIAGNRLWQYFESPGILPFFVFRRVWQDGWRGK). Residues 649–669 (LLYIYILGYFVFGTMAHSAWL) form a helical membrane-spanning segment. Topologically, residues 670-672 (PFT) are extracellular.

Belongs to the PIGV family. As to expression, expressed in epithelial tissues including the epidermis, pharynx, intestine, rectum and excretory cell during embryogenesis.

It localises to the endoplasmic reticulum membrane. It functions in the pathway glycolipid biosynthesis; glycosylphosphatidylinositol-anchor biosynthesis. Alpha-1,6-mannosyltransferase involved in glycosylphosphatidylinositol-anchor biosynthesis. Transfers the second mannose to the glycosylphosphatidylinositol during GPI precursor assembly. Required for maintenance of epithelial integrity during embryogenesis. The chain is GPI mannosyltransferase pigv-1 from Caenorhabditis elegans.